The following is a 437-amino-acid chain: Serine--tRNA ligase (437 aa).

L-serine is bound at residue 244 to 246; sequence TAE. 275-277 provides a ligand contact to ATP; it reads RSE. E298 provides a ligand contact to L-serine. 362-365 is an ATP binding site; the sequence is EISS. Residue S397 participates in L-serine binding.

It belongs to the class-II aminoacyl-tRNA synthetase family. Type-1 seryl-tRNA synthetase subfamily. As to quaternary structure, homodimer. The tRNA molecule binds across the dimer.

The protein localises to the cytoplasm. The enzyme catalyses tRNA(Ser) + L-serine + ATP = L-seryl-tRNA(Ser) + AMP + diphosphate + H(+). The catalysed reaction is tRNA(Sec) + L-serine + ATP = L-seryl-tRNA(Sec) + AMP + diphosphate + H(+). It functions in the pathway aminoacyl-tRNA biosynthesis; selenocysteinyl-tRNA(Sec) biosynthesis; L-seryl-tRNA(Sec) from L-serine and tRNA(Sec): step 1/1. Catalyzes the attachment of serine to tRNA(Ser). Is also able to aminoacylate tRNA(Sec) with serine, to form the misacylated tRNA L-seryl-tRNA(Sec), which will be further converted into selenocysteinyl-tRNA(Sec). This chain is Serine--tRNA ligase, found in Nitrosomonas eutropha (strain DSM 101675 / C91 / Nm57).